A 35-amino-acid chain; its full sequence is Alpha-amanitin proprotein 1 (35 aa).

Positions 1–10 (MSDINATRLP) are excised as a propeptide. (3R,4R)-4,5-dihydroxyisoleucine; in form alpha-amanitin is present on Ile11. At Ile11 the chain carries (3R,4S)-4-hydroxyisoleucine; in form gamma-amanitin. A cross-link (cyclopeptide (Ile-Pro)) is located at residues 11–18 (IWGIGCNP). The 2'-cysteinyl-6'-hydroxytryptophan sulfoxide (Trp-Cys) cross-link spans 12–16 (WGIGC). At Pro18 the chain carries 4-hydroxyproline. Positions 19–35 (CVGDDVTSVLTRGEALC) are excised as a propeptide.

The protein belongs to the MSDIN fungal toxin family. In terms of processing, processed by the macrocyclase-peptidase enzyme POPB to yield a toxic cyclic octapeptide. POPB first removes 10 residues from the N-terminus. Conformational trapping of the remaining peptide forces the enzyme to release this intermediate rather than proceed to macrocyclization. The enzyme rebinds the remaining peptide in a different conformation and catalyzes macrocyclization of the N-terminal 8 residues. Expressed in basidiocarps.

Its function is as follows. Major toxin belonging to the bicyclic octapeptides amatoxins that acts by binding non-competitively to RNA polymerase II and greatly slowing the elongation of transcripts from target promoters. This Amanita exitialis (Guangzhou destroying angel) protein is Alpha-amanitin proprotein 1.